Consider the following 972-residue polypeptide: Translation initiation factor IF-2 (972 aa).

Positions 48–63 (DHLRKSHGATDGDKRK) are enriched in basic and acidic residues. 2 disordered regions span residues 48 to 85 (DHLR…KART) and 99 to 385 (RDDV…QAPT). Residues 105–114 (GAEQGQAQVA) show a composition bias toward low complexity. A compositionally biased stretch (basic and acidic residues) spans 121 to 181 (ELKRREEEAR…EEEAAAKRVA (61 aa)). Low complexity predominate over residues 182–205 (AEAAAAQQQAAAQQAAAAEQQEAA). Positions 212–263 (DEARAAAERAAQREAAKKAEDAAREAADKARAEQEEISKRRAAAEAEARAIR) are enriched in basic and acidic residues. A compositionally biased stretch (pro residues) spans 279–288 (PPKPVEPPKP). Residues 313–328 (PAGAAAPATTAPAGAG) show a composition bias toward low complexity. Residues 357 to 370 (SSGGVDRGWRGGPK) show a composition bias toward gly residues. In terms of domain architecture, tr-type G spans 472 to 641 (PRPPVVTVMG…LLQAEVLELK (170 aa)). The segment at 481 to 488 (GHVDHGKT) is G1. 481-488 (GHVDHGKT) contacts GTP. The G2 stretch occupies residues 506–510 (GITQH). A G3 region spans residues 527–530 (DTPG). Residues 527–531 (DTPGH) and 581–584 (NKID) each bind GTP. Positions 581 to 584 (NKID) are G4. A G5 region spans residues 617-619 (SAK).

Belongs to the TRAFAC class translation factor GTPase superfamily. Classic translation factor GTPase family. IF-2 subfamily.

It localises to the cytoplasm. Functionally, one of the essential components for the initiation of protein synthesis. Protects formylmethionyl-tRNA from spontaneous hydrolysis and promotes its binding to the 30S ribosomal subunits. Also involved in the hydrolysis of GTP during the formation of the 70S ribosomal complex. This Burkholderia lata (strain ATCC 17760 / DSM 23089 / LMG 22485 / NCIMB 9086 / R18194 / 383) protein is Translation initiation factor IF-2.